The following is a 267-amino-acid chain: Translation initiation factor 2 subunit alpha (267 aa).

In terms of domain architecture, S1 motif spans G12–K83.

It belongs to the eIF-2-alpha family. As to quaternary structure, heterotrimer composed of an alpha, a beta and a gamma chain.

Functionally, eIF-2 functions in the early steps of protein synthesis by forming a ternary complex with GTP and initiator tRNA. This chain is Translation initiation factor 2 subunit alpha, found in Hyperthermus butylicus (strain DSM 5456 / JCM 9403 / PLM1-5).